Here is a 296-residue protein sequence, read N- to C-terminus: Glycine--tRNA ligase alpha subunit (296 aa).

This sequence belongs to the class-II aminoacyl-tRNA synthetase family. In terms of assembly, tetramer of two alpha and two beta subunits.

The protein resides in the cytoplasm. It catalyses the reaction tRNA(Gly) + glycine + ATP = glycyl-tRNA(Gly) + AMP + diphosphate. The protein is Glycine--tRNA ligase alpha subunit of Desulfitobacterium hafniense (strain DSM 10664 / DCB-2).